The chain runs to 203 residues: MNNLKQGKFITFEGGEGIGKSTQSQMLYEYLQSQNTPVILTREVGGTIVAEKMREILVHEELLPMSELFQAMAARYDHMARKIIPALQEGHIVICDRFIDSTVCYQGLELENGIDLVYNLHKTLMPSLMPDITFFIDVEPDTAIKRVNSRNMNNKFDIRGIDFYKKIYYCFKELSNRFPERIKTIKASDLSPLEVHELIKKHL.

14–21 (GGEGIGKS) serves as a coordination point for ATP.

Belongs to the thymidylate kinase family.

It catalyses the reaction dTMP + ATP = dTDP + ADP. Phosphorylation of dTMP to form dTDP in both de novo and salvage pathways of dTTP synthesis. The sequence is that of Thymidylate kinase from Rickettsia rickettsii (strain Iowa).